Here is a 654-residue protein sequence, read N- to C-terminus: tRNA uridine 5-carboxymethylaminomethyl modification enzyme MnmG (654 aa).

Residue 17 to 22 (GGGHAG) coordinates FAD. 289–303 (GPRYCPSIEDKIVKF) lines the NAD(+) pocket.

The protein belongs to the MnmG family. In terms of assembly, homodimer. Heterotetramer of two MnmE and two MnmG subunits. It depends on FAD as a cofactor.

It localises to the cytoplasm. Its function is as follows. NAD-binding protein involved in the addition of a carboxymethylaminomethyl (cmnm) group at the wobble position (U34) of certain tRNAs, forming tRNA-cmnm(5)s(2)U34. The sequence is that of tRNA uridine 5-carboxymethylaminomethyl modification enzyme MnmG from Prochlorococcus marinus subsp. pastoris (strain CCMP1986 / NIES-2087 / MED4).